We begin with the raw amino-acid sequence, 302 residues long: Lysosomal thioesterase PPT2 (302 aa).

The signal sequence occupies residues 1–27 (MPGLWRQRLPSAWALLLLPFLPLLLPA). A glycan (N-linked (GlcNAc...) asparagine) is linked at asparagine 60. 2 cysteine pairs are disulfide-bonded: cysteine 109–cysteine 117 and cysteine 165–cysteine 176. The active-site Nucleophile is serine 111. N-linked (GlcNAc...) asparagine glycosylation is found at asparagine 190 and asparagine 206. Aspartate 228 is an active-site residue. The N-linked (GlcNAc...) asparagine glycan is linked to asparagine 245. A disulfide bridge connects residues cysteine 276 and cysteine 296. The active site involves histidine 283. Asparagine 289 is a glycosylation site (N-linked (GlcNAc...) asparagine).

The protein belongs to the palmitoyl-protein thioesterase family.

Its subcellular location is the lysosome. The catalysed reaction is hexadecanoyl-CoA + H2O = hexadecanoate + CoA + H(+). It catalyses the reaction S-hexadecanoyl-N-acetylcysteamine + H2O = N-acetylcysteamine + hexadecanoate + H(+). Its function is as follows. Catalyzes the cleavage of thioester bonds from S-palmitoyl-CoA or S-palmitoyl-N-acetylcysteamine (unbranched structures) but does not have activity against palmitoylcysteine or palmitoylated proteins, branched structures or bulky head groups. Conversely, hydrolyzes both long and short chain fatty acyl-CoA substrate. The sequence is that of Lysosomal thioesterase PPT2 (Ppt2) from Rattus norvegicus (Rat).